The primary structure comprises 162 residues: Caveolin-2 (162 aa).

Topologically, residues 1–86 are cytoplasmic; the sequence is MGLETEKADV…FEISKYVIYK (86 aa). Tyr19 carries the phosphotyrosine; by SRC modification. 2 positions are modified to phosphoserine: Ser20 and Ser23. At Tyr27 the chain carries Phosphotyrosine; by SRC. Ser36 is modified (phosphoserine). Positions 87-107 form an intramembrane region, helical; it reads FLTLFLAIPLAFAAGILFATL. Residues 108–162 are Cytoplasmic-facing; the sequence is SCLHIWIIMPFVKTCLMVLPSVQTIWKSITDVVIAPLCTSVGRSFSSVSLQLSHD.

It belongs to the caveolin family. Monomer or homodimer. Interacts with CAV1; the interaction forms a stable heterooligomeric complex that is required for targeting to lipid rafts and for caveolae formation. Tyrosine phosphorylated forms do not form heterooligomers with the Tyr-19-phosphorylated form existing as a monomer or dimer, and the Tyr-27-form as a monomer only. Interacts (tyrosine phosphorylated form) with the SH2 domain-containing proteins, RASA1, NCK1 and SRC. Interacts (tyrosine phosphorylated form) with INSR, the interaction (Tyr-27-phosphorylated form) is increased on insulin stimulation. Interacts (Tyr-19 phosphorylated form) with MAPK1 (phosphorylated form); the interaction, promoted by insulin, leads to nuclear location and MAPK1 activation. Interacts with STAT3; the interaction is increased on insulin-induced tyrosine phosphorylation leading to STAT activation. Post-translationally, phosphorylated on serine and tyrosine residues. CAV1 promotes phosphorylation on Ser-23 which then targets the complex to the plasma membrane, lipid rafts and caveolae. Phosphorylation on Ser-36 appears to modulate mitosis in endothelial cells. Phosphorylation on both Tyr-19 and Tyr-27 is required for insulin-induced 'Ser-727' phosphorylation of STAT3 and its activation. Phosphorylation on Tyr-19 is required for insulin-induced phosphorylation of MAPK1 and DNA binding of STAT3. Tyrosine phosphorylation is induced by both EGF and insulin (By. similarity).

Its subcellular location is the nucleus. It localises to the cytoplasm. The protein resides in the golgi apparatus membrane. It is found in the cell membrane. The protein localises to the membrane. Its subcellular location is the caveola. In terms of biological role, may act as a scaffolding protein within caveolar membranes. Interacts directly with G-protein alpha subunits and can functionally regulate their activity. Acts as an accessory protein in conjunction with CAV1 in targeting to lipid rafts and driving caveolae formation. The Ser-36 phosphorylated form has a role in modulating mitosis in endothelial cells. Positive regulator of cellular mitogenesis of the MAPK signaling pathway. Required for the insulin-stimulated nuclear translocation and activation of MAPK1 and STAT3, and the subsequent regulation of cell cycle progression. The sequence is that of Caveolin-2 (CAV2) from Neofelis nebulosa (Clouded leopard).